The chain runs to 357 residues: Hypersensitivity response secretion protein HrcU (357 aa).

The tract at residues 1–21 is disordered; it reads MSDEKTEQPTDKKLEDAHRDG. Transmembrane regions (helical) follow at residues 29-49, 84-104, 149-169, 180-200, and 323-343; these read LTAA…ASVF, LVLM…IATW, VAVA…IVGA, IGMT…LILG, and LYGP…AWVG.

Belongs to the type III secretion exporter family.

The protein resides in the cell membrane. In terms of biological role, involved in the secretion of PopA, a proteinaceous elicitor of the hypersensitivity response in plants. The protein is Hypersensitivity response secretion protein HrcU (hrcU) of Ralstonia nicotianae (strain ATCC BAA-1114 / GMI1000) (Ralstonia solanacearum).